The primary structure comprises 62 residues: Large ribosomal subunit protein bL28 (62 aa).

This sequence belongs to the bacterial ribosomal protein bL28 family.

In Aliarcobacter butzleri (strain RM4018) (Arcobacter butzleri), this protein is Large ribosomal subunit protein bL28.